Here is a 551-residue protein sequence, read N- to C-terminus: Cleavage and polyadenylation specificity factor subunit 6 (551 aa).

The RRM domain maps to 81-161; it reads IALYIGNLTW…QNPVVTPCNK (81 aa). Threonine 157 carries the post-translational modification Phosphothreonine. The span at 169–180 shows a compositional bias: polar residues; sequence MQSRKTTQSGQM. 2 disordered regions span residues 169-410 and 477-551; these read MQSR…TPLS and LHGI…YRHR. 3 stretches are compositionally biased toward pro residues: residues 237–265, 285–366, and 377–388; these read TRPP…PLAG, GQPP…PPPA, and GPPPTDPYGRPP. Composition is skewed to basic and acidic residues over residues 389–404 and 489–503; these read PYDR…EMDA and SRRE…SRSR. Phosphoserine occurs at positions 494, 500, 511, 513, and 525. Basic residues predominate over residues 504–514; it reads EKSRRHKSRSR. Basic and acidic residues predominate over residues 515–551; sequence DRHDDYYRERSRERERHRDRDRDRDRERDREREYRHR.

Belongs to the RRM CPSF6/7 family. In terms of assembly, component of the cleavage factor Im (CFIm) complex.

The protein resides in the nucleus. The protein localises to the nucleoplasm. Its subcellular location is the nucleus speckle. It is found in the cytoplasm. Functionally, component of the cleavage factor Im (CFIm) complex that functions as an activator of the pre-mRNA 3'-end cleavage and polyadenylation processing required for the maturation of pre-mRNA into functional mRNAs. CFIm contributes to the recruitment of multiprotein complexes on specific sequences on the pre-mRNA 3'-end, so called cleavage and polyadenylation signals (pA signals). Most pre-mRNAs contain multiple pA signals, resulting in alternative cleavage and polyadenylation (APA) producing mRNAs with variable 3'-end formation. The CFIm complex acts as a key regulator of cleavage and polyadenylation site choice during APA through its binding to 5'-UGUA-3' elements localized in the 3'-untranslated region (UTR) for a huge number of pre-mRNAs. Plays a role in mRNA export. In Gallus gallus (Chicken), this protein is Cleavage and polyadenylation specificity factor subunit 6.